Here is a 721-residue protein sequence, read N- to C-terminus: YTH domain-containing protein 1 (721 aa).

The span at 29–38 (EADIAEELQD) shows a compositional bias: acidic residues. The interval 29 to 239 (EADIAEELQD…GGGTHSHSQK (211 aa)) is disordered. Residues 48-75 (SESNGGDSSDSEPSISSVSTATSSLAGS) show a composition bias toward low complexity. Residues 135–151 (ASDKVKSKSPDTEDRQP) show a composition bias toward basic and acidic residues. Positions 254 to 391 (TRFFLIKSNN…KIGGELCRLF (138 aa)) constitute a YTH domain. RNA contacts are provided by residues 260–262 (KSN), tryptophan 276, and tryptophan 327. Disordered regions lie at residues 424–471 (PPRS…RHHH), 580–605 (DGPG…DKAP), and 651–721 (AGGG…DNRR). Gly residues predominate over residues 432–443 (GHGGGGRGGGRG). Residues 451–471 (PMRHKRSYHGAPHHRPYRHHH) are compositionally biased toward basic residues. A compositionally biased stretch (pro residues) spans 583 to 600 (GAPPLPDYPPPQRPPPPG). A compositionally biased stretch (gly residues) spans 651–670 (AGGGMGAGGGSGGGMGGPGG). A compositionally biased stretch (basic and acidic residues) spans 699–708 (RDSRPFRERG).

It is found in the nucleus. Regulator of alternative splicing that specifically recognizes and binds N6-methyladenosine (m6A)-containing RNAs. Acts by acting as a reader of m6A methylation. Required for sex determination and dosage compensation via Sxl alternative splicing: m6A methylation acts as a key regulator of Sxl pre-mRNA and promotes female-specific alternative splicing of Sxl, which determines female physiognomy. M6A methylation is also required for neuronal functions. This chain is YTH domain-containing protein 1, found in Drosophila melanogaster (Fruit fly).